Here is a 465-residue protein sequence, read N- to C-terminus: Kinesin-like protein KIN-1 (465 aa).

In terms of domain architecture, Kinesin motor spans asparagine 3–isoleucine 334. Residue glycine 87–threonine 94 coordinates ATP. Residues proline 338 to aspartate 358 form a disordered region. Over residues serine 341–aspartate 358 the composition is skewed to basic and acidic residues. Residues valine 402–glutamate 444 adopt a coiled-coil conformation.

The protein belongs to the TRAFAC class myosin-kinesin ATPase superfamily. Kinesin family. KIN-1 subfamily. As to quaternary structure, homodimer. Interacts with WIP1 and WIP2. As to expression, specifically expressed in ovules and anthers.

Functionally, kinesin-like motor protein that promotes synapsis and is required for proper crossover distribution in meiosis. Plays a role in the nuclear division cycles during megagametogenesis. This Arabidopsis thaliana (Mouse-ear cress) protein is Kinesin-like protein KIN-1.